Here is a 57-residue protein sequence, read N- to C-terminus: Cecropin-A (57 aa).

The N-terminal stretch at 1–21 is a signal peptide; that stretch reads IFFFVFACLLALSAVSAAPEP.

It belongs to the cecropin family.

Its subcellular location is the secreted. In terms of biological role, cecropins have lytic and antibacterial activity against several Gram-positive and Gram-negative bacteria. In Spodoptera litura (Asian cotton leafworm), this protein is Cecropin-A (CECA).